The sequence spans 161 residues: MPSFDVVCEANMIEVKNAIEQSNKEISTRFDFKGSDARVEQKERELTAFADDEFKLGQVKDVLVSKMAKRNVDVRFLDYGKIEKIGGDKVKQVVTVKKGVSGDLAKKIVKLVKDSKIKVQASIQGDAVRVTGTKRDDLQSVIAMLRKDVTDTPLDFNNFRD.

This sequence belongs to the YajQ family.

Functionally, nucleotide-binding protein. The protein is Nucleotide-binding protein Bphy_0527 of Paraburkholderia phymatum (strain DSM 17167 / CIP 108236 / LMG 21445 / STM815) (Burkholderia phymatum).